A 327-amino-acid polypeptide reads, in one-letter code: Fe-S cluster assembly protein DRE2 (327 aa).

Polar residues predominate over residues 1-14 (MSPATVTIDTTPDF). Disordered stretches follow at residues 1 to 20 (MSPA…GGAP) and 153 to 179 (NKGE…AAAA). The N-terminal SAM-like domain stretch occupies residues 17–144 (GGAPHSTLLL…EKPAEEVAAV (128 aa)). The segment at 145–214 (PLKFLKKKNK…EDELMTEEDL (70 aa)) is linker. A compositionally biased stretch (low complexity) spans 164–179 (PAAATQPTAPAPAAAA). [2Fe-2S] cluster contacts are provided by C224, C235, C238, and C240. The interval 224–240 (CAPKPGKKRRACKDCTC) is fe-S binding site A. Residues C290, C293, C301, and C304 each contribute to the [4Fe-4S] cluster site. 2 consecutive short sequence motifs (cx2C motif) follow at residues 290–293 (CGSC) and 301–304 (CADC). The fe-S binding site B stretch occupies residues 290–304 (CGSCALGDAFRCADC).

Belongs to the anamorsin family. Monomer. Interacts with TAH18. Interacts with MIA40. [2Fe-2S] cluster serves as cofactor. It depends on [4Fe-4S] cluster as a cofactor.

It localises to the cytoplasm. It is found in the mitochondrion intermembrane space. In terms of biological role, component of the cytosolic iron-sulfur (Fe-S) protein assembly (CIA) machinery required for the maturation of extramitochondrial Fe-S proteins. Part of an electron transfer chain functioning in an early step of cytosolic Fe-S biogenesis, facilitating the de novo assembly of a [4Fe-4S] cluster on the scaffold complex CFD1-NBP35. Electrons are transferred to DRE2 from NADPH via the FAD- and FMN-containing protein TAH18. TAH18-DRE2 are also required for the assembly of the diferric tyrosyl radical cofactor of ribonucleotide reductase (RNR), probably by providing electrons for reduction during radical cofactor maturation in the catalytic small subunit RNR2. The protein is Fe-S cluster assembly protein DRE2 of Pyricularia oryzae (strain 70-15 / ATCC MYA-4617 / FGSC 8958) (Rice blast fungus).